The following is a 379-amino-acid chain: Sperm microtubule associated protein 2 (379 aa).

Positions 1 to 82 are disordered; that stretch reads MGDSRRRSLG…EFPETLDPKE (82 aa). 2 stretches are compositionally biased toward basic and acidic residues: residues 19–29 and 38–50; these read GRSEREQDGDP and ESRRVTDPERQDL. Positions 56–76 are enriched in acidic residues; the sequence is GPEDPEEELPPEEVAGEEFPE. 6 THEG repeats span residues 118-137, 184-203, 222-241, 258-277, 290-309, and 326-345; these read KARKRRRRRRLMELAEPKIN, TITVPAVSRRVEELSRPKRF, SSLEYRASSRLKELAAPKIR, AAQMAVPSSRILQLSKPKAP, PKPHVSDHNRLLHLARPKAQ, and VTKKVVASPRIISLAKPKVR. Ser295 is subject to Phosphoserine. The disordered stretch occupies residues 344–379; sequence VRKGLNEGYDRRPLASMSLPPPKASPEKCDQPRPGL. Basic and acidic residues-rich tracts occupy residues 347–356 and 368–379; these read GLNEGYDRRP and SPEKCDQPRPGL.

As to quaternary structure, interacts with CCT5. As to expression, testis specific.

It localises to the nucleus. May be involved (but not essential) in spermatogenesis. The polypeptide is Sperm microtubule associated protein 2 (Homo sapiens (Human)).